A 224-amino-acid polypeptide reads, in one-letter code: Small ribosomal subunit protein uS3 (224 aa).

The KH type-2 domain maps to 39-107 (VRKYIQNALA…PVHINIEEIR (69 aa)).

The protein belongs to the universal ribosomal protein uS3 family. Part of the 30S ribosomal subunit. Forms a tight complex with proteins S10 and S14.

In terms of biological role, binds the lower part of the 30S subunit head. Binds mRNA in the 70S ribosome, positioning it for translation. This is Small ribosomal subunit protein uS3 from Saccharophagus degradans (strain 2-40 / ATCC 43961 / DSM 17024).